The following is a 142-amino-acid chain: HTH-type transcriptional regulator MntR (142 aa).

In terms of domain architecture, HTH dtxR-type spans 1–63 (MPTPSMEDYI…YEKYRGLILT (63 aa)). Residues D8, E11, H77, E99, E102, and H103 each coordinate Mn(2+).

Belongs to the DtxR/MntR family. As to quaternary structure, homodimer.

It is found in the cytoplasm. Its activity is regulated as follows. DNA binding is strongly activated by Mn(2+). Its function is as follows. Central regulator of manganese homeostasis. In Listeria welshimeri serovar 6b (strain ATCC 35897 / DSM 20650 / CCUG 15529 / CIP 8149 / NCTC 11857 / SLCC 5334 / V8), this protein is HTH-type transcriptional regulator MntR.